The sequence spans 455 residues: Chromosomal replication initiator protein DnaA (455 aa).

The interval 1–74 (MSEQEIWEKV…LYEAIGHEIA (74 aa)) is domain I, interacts with DnaA modulators. The tract at residues 74–116 (APVFYTEEELKSLHTSEQKEENQPEQPAKKYTPGVDEAVIGGE) is domain II. Residues 85–95 (SLHTSEQKEEN) show a composition bias toward basic and acidic residues. The segment at 85–104 (SLHTSEQKEENQPEQPAKKY) is disordered. The interval 117–333 (QFNTHNTFET…GALTRVLAFS (217 aa)) is domain III, AAA+ region. ATP is bound by residues G161, G163, K164, and T165. The domain IV, binds dsDNA stretch occupies residues 334–455 (KLQGQPITTE…ENLEKEIRNQ (122 aa)).

It belongs to the DnaA family. Oligomerizes as a right-handed, spiral filament on DNA at oriC.

The protein localises to the cytoplasm. Its function is as follows. Plays an essential role in the initiation and regulation of chromosomal replication. ATP-DnaA binds to the origin of replication (oriC) to initiate formation of the DNA replication initiation complex once per cell cycle. Binds the DnaA box (a 9 base pair repeat at the origin) and separates the double-stranded (ds)DNA. Forms a right-handed helical filament on oriC DNA; dsDNA binds to the exterior of the filament while single-stranded (ss)DNA is stabiized in the filament's interior. The ATP-DnaA-oriC complex binds and stabilizes one strand of the AT-rich DNA unwinding element (DUE), permitting loading of DNA polymerase. After initiation quickly degrades to an ADP-DnaA complex that is not apt for DNA replication. Binds acidic phospholipids. The chain is Chromosomal replication initiator protein DnaA from Staphylococcus saprophyticus subsp. saprophyticus (strain ATCC 15305 / DSM 20229 / NCIMB 8711 / NCTC 7292 / S-41).